Reading from the N-terminus, the 218-residue chain is Probable GTP-binding protein EngB (218 aa).

Residues 31–205 (VGVEIAFAGR…LGILNEWCHP (175 aa)) form the EngB-type G domain. Residues 39–46 (GRSNAGKS), 66–70 (GRTQL), 84–87 (DLPG), 151–154 (TKCD), and 184–186 (FSS) each bind GTP. The Mg(2+) site is built by S46 and T68.

This sequence belongs to the TRAFAC class TrmE-Era-EngA-EngB-Septin-like GTPase superfamily. EngB GTPase family. The cofactor is Mg(2+).

Necessary for normal cell division and for the maintenance of normal septation. This chain is Probable GTP-binding protein EngB, found in Shewanella loihica (strain ATCC BAA-1088 / PV-4).